The sequence spans 173 residues: MDPNSPMFQNTPQQPMSLQRSVDDRIDRERTAKKEKDDEKKKQEDEKILQLEKKLEEFQENARFIGDLASNFQTKYQDALNGRIYTLIRGLQDLDRMKGTFSDKNVPLDILPYLDDGKNPLLYSKHCMEKTLEKNKAVNGKIEMYKKFRAHLIKEFSEEMPDFVIEYRKERGQ.

A compositionally biased stretch (polar residues) spans 1–20 (MDPNSPMFQNTPQQPMSLQR). The segment at 1-45 (MDPNSPMFQNTPQQPMSLQRSVDDRIDRERTAKKEKDDEKKKQED) is disordered. Positions 21–45 (SVDDRIDRERTAKKEKDDEKKKQED) are enriched in basic and acidic residues.

This sequence belongs to the Mediator complex subunit 10 family. Component of the Mediator complex.

Its subcellular location is the nucleus. In terms of biological role, component of the Mediator complex, a coactivator involved in the regulated transcription of nearly all RNA polymerase II-dependent genes. Mediator functions as a bridge to convey information from gene-specific regulatory proteins to the basal RNA polymerase II transcription machinery. Mediator is recruited to promoters by direct interactions with regulatory proteins and serves as a scaffold for the assembly of a functional preinitiation complex with RNA polymerase II and the general transcription factors. The protein is Mediator of RNA polymerase II transcription subunit 10 (mdt-10) of Caenorhabditis briggsae.